A 185-amino-acid chain; its full sequence is MTQSTVSSTIVEPYAEALMSVAQSNNLTNQIGEDVSFVLSLLQTSDDLKDFLVNPLTPADAQKAVLRQLAESRVQKQFFNFLLLLIDRRRIIFLEGICKYYQALLRKLNNTVLAEVTSTVELTDEQRHAITDKVKHMSQAAQVDLETSIDPDLIGGVIIKIGSQVLDASIRGQLRRMNSSITSLS.

Belongs to the ATPase delta chain family. In terms of assembly, F-type ATPases have 2 components, F(1) - the catalytic core - and F(0) - the membrane proton channel. F(1) has five subunits: alpha(3), beta(3), gamma(1), delta(1), epsilon(1). CF(0) has four main subunits: a(1), b(1), b'(1) and c(10-14). The alpha and beta chains form an alternating ring which encloses part of the gamma chain. F(1) is attached to F(0) by a central stalk formed by the gamma and epsilon chains, while a peripheral stalk is formed by the delta, b and b' chains.

Its subcellular location is the cellular thylakoid membrane. F(1)F(0) ATP synthase produces ATP from ADP in the presence of a proton or sodium gradient. F-type ATPases consist of two structural domains, F(1) containing the extramembraneous catalytic core and F(0) containing the membrane proton channel, linked together by a central stalk and a peripheral stalk. During catalysis, ATP synthesis in the catalytic domain of F(1) is coupled via a rotary mechanism of the central stalk subunits to proton translocation. Its function is as follows. This protein is part of the stalk that links CF(0) to CF(1). It either transmits conformational changes from CF(0) to CF(1) or is implicated in proton conduction. The polypeptide is ATP synthase subunit delta (Acaryochloris marina (strain MBIC 11017)).